The sequence spans 142 residues: Baculoviral IAP repeat-containing protein 5 (142 aa).

The stretch at 18–88 (RIYTFKNWPF…KHSPGCAFLT (71 aa)) is one BIR repeat. The residue at position 23 (lysine 23) is an N6-acetyllysine. A Phosphothreonine; by CDK1 and CDK15 modification is found at threonine 34. A Phosphothreonine modification is found at threonine 48. Zn(2+) is bound by residues cysteine 57, cysteine 60, histidine 77, and cysteine 84. Lysine 90, lysine 110, lysine 112, and lysine 115 each carry N6-acetyllysine. Position 117 is a phosphothreonine; by AURKB (threonine 117).

Belongs to the IAP family. In terms of assembly, monomer or homodimer. Exists as a homodimer in the apo state and as a monomer in the CPC-bound state. The monomer protects cells against apoptosis more efficiently than the dimer. Only the dimeric form is capable of enhancing tubulin stability in cells. When phosphorylated, interacts with LAMTOR5/HBXIP; the resulting complex binds pro-CASP9, as well as active CASP9, but much less efficiently. Component of the chromosomal passenger complex (CPC) composed of at least BIRC5/survivin, CDCA8/borealin, INCENP, AURKB or AURKC; in the complex forms a triple-helix bundle-based subcomplex with INCENP and CDCA8. Interacts with JTB. Interacts (via BIR domain) with histone H3 phosphorylated at 'Thr-3' (H3pT3). Interacts with EVI5. Interacts with GTP-bound RAN in both the S and M phases of the cell cycle. Interacts with USP9X. Interacts with tubulin. Interacts with BIRC2/c-IAP1. The monomeric form interacts with XIAP/BIRC4. Both the dimeric and monomeric form can interact with DIABLO/SMAC. Interacts with BIRC6/bruce. Interacts with FBXL7; this interaction facilitates the polyubiquitination and subsequent proteasomal degradation of BIRC5 by the SCF(FBXL7) E3 ubiquitin-protein ligase complex. Post-translationally, ubiquitinated by the Cul9-RING ubiquitin-protein ligase complex, leading to its degradation. Ubiquitination is required for centrosomal targeting. Deubiquitinated by USP35 or USP38; leading to stabilization. In terms of processing, in vitro phosphorylation at Thr-117 by AURKB prevents interaction with INCENP and localization to mitotic chromosomes. Phosphorylation at Thr-48 by CK2 is critical for its mitotic and anti-apoptotic activities. Phosphorylation at Thr-34 by CDK15 is critical for its anti-apoptotic activity.

It is found in the cytoplasm. The protein localises to the nucleus. It localises to the chromosome. Its subcellular location is the centromere. The protein resides in the cytoskeleton. It is found in the spindle. The protein localises to the kinetochore. It localises to the midbody. In terms of biological role, multitasking protein that has dual roles in promoting cell proliferation and preventing apoptosis. Component of a chromosome passage protein complex (CPC) which is essential for chromosome alignment and segregation during mitosis and cytokinesis. Acts as an important regulator of the localization of this complex; directs CPC movement to different locations from the inner centromere during prometaphase to midbody during cytokinesis and participates in the organization of the center spindle by associating with polymerized microtubules. Involved in the recruitment of CPC to centromeres during early mitosis via association with histone H3 phosphorylated at 'Thr-3' (H3pT3) during mitosis. The complex with RAN plays a role in mitotic spindle formation by serving as a physical scaffold to help deliver the RAN effector molecule TPX2 to microtubules. May counteract a default induction of apoptosis in G2/M phase. The acetylated form represses STAT3 transactivation of target gene promoters. May play a role in neoplasia. Inhibitor of CASP3 and CASP7. Essential for the maintenance of mitochondrial integrity and function. This is Baculoviral IAP repeat-containing protein 5 (Birc5) from Rattus norvegicus (Rat).